The following is a 222-amino-acid chain: NADH dehydrogenase [ubiquinone] iron-sulfur protein 8-B, mitochondrial (222 aa).

4Fe-4S ferredoxin-type domains are found at residues Arg-114 to Glu-143 and Thr-153 to Asn-182. [4Fe-4S] cluster contacts are provided by Cys-123, Cys-126, Cys-129, Cys-133, Cys-162, Cys-165, Cys-168, and Cys-172.

This sequence belongs to the complex I 23 kDa subunit family. In terms of assembly, complex I is composed of at least 49 different subunits. This is a component of the iron-sulfur (IP) fragment of the enzyme. It depends on [4Fe-4S] cluster as a cofactor.

It localises to the mitochondrion. It catalyses the reaction a ubiquinone + NADH + 5 H(+)(in) = a ubiquinol + NAD(+) + 4 H(+)(out). Core subunit of the mitochondrial membrane respiratory chain NADH dehydrogenase (Complex I) that is believed to belong to the minimal assembly required for catalysis. Complex I functions in the transfer of electrons from NADH to the respiratory chain. The immediate electron acceptor for the enzyme is believed to be ubiquinone. May donate electrons to ubiquinone. In Arabidopsis thaliana (Mouse-ear cress), this protein is NADH dehydrogenase [ubiquinone] iron-sulfur protein 8-B, mitochondrial.